The primary structure comprises 587 residues: Serine/threonine-protein phosphatase 2A 65 kDa regulatory subunit A gamma isoform (587 aa).

S2 is modified (N-acetylserine). HEAT repeat units follow at residues 2 to 42, 44 to 80, 81 to 119, 158 to 194, 197 to 235, 236 to 274, 276 to 313, 314 to 352, 353 to 391, 393 to 430, 432 to 469, 470 to 508, 509 to 547, and 549 to 586; these read SMVD…ALGE, RTRK…YVGG, VEYA…QMRE, DVLK…AATI, AHLK…LLEP, QDCV…AVGP, PTRT…ILNP, ELAI…VLGK, DATI…VIGI, LLSQ…QLGV, FFDE…EFGP, EWAM…VMGS, EITC…IVDQ, and VVEN…VMMS.

This sequence belongs to the phosphatase 2A regulatory subunit A family. PP2A consists of a common heterodimeric core enzyme, composed of a 36 kDa catalytic subunit (subunit C) and a 65 kDa constant regulatory subunit (subunit A), that associates with a variety of regulatory subunits such as subunits B (the R2/B/PR55/B55, R3/B''/PR72/PR130/PR59 and R5/B'/B56 families). Interacts with CHIP. Interacts with SRK2E/OST1. Post-translationally, ubiquitinated. CHIP-mediated ubiquitination enhances phosphatase activity after an abiotic stress such as low temperature or darkness. As to expression, expressed ubiquitously at stable levels. However, higher protein levels in roots and flowers (at protein level).

Its subcellular location is the cytoplasm. It localises to the cytosol. The protein resides in the nucleus. Functionally, the A subunit of protein phosphatase 2A serves as a scaffolding molecule to coordinate the assembly of the catalytic subunit and a variable regulatory B subunit. Involved during developmental process such as seedling and floral developments. Seems to act as a negative regulator of PP2A catalytic activity. In Arabidopsis thaliana (Mouse-ear cress), this protein is Serine/threonine-protein phosphatase 2A 65 kDa regulatory subunit A gamma isoform (PP2AA3).